The primary structure comprises 53 residues: ATP synthase protein 8 (53 aa).

Residues 6–26 (PIGWLSLFIIFSLTFILFSMM) form a helical membrane-spanning segment.

It belongs to the ATPase protein 8 family. F-type ATPases have 2 components, CF(1) - the catalytic core - and CF(0) - the membrane proton channel.

The protein resides in the mitochondrion membrane. In terms of biological role, mitochondrial membrane ATP synthase (F(1)F(0) ATP synthase or Complex V) produces ATP from ADP in the presence of a proton gradient across the membrane which is generated by electron transport complexes of the respiratory chain. F-type ATPases consist of two structural domains, F(1) - containing the extramembraneous catalytic core and F(0) - containing the membrane proton channel, linked together by a central stalk and a peripheral stalk. During catalysis, ATP synthesis in the catalytic domain of F(1) is coupled via a rotary mechanism of the central stalk subunits to proton translocation. Part of the complex F(0) domain. Minor subunit located with subunit a in the membrane. This Ceratitis capitata (Mediterranean fruit fly) protein is ATP synthase protein 8 (mt:ATPase8).